We begin with the raw amino-acid sequence, 296 residues long: Indole-3-glycerol phosphate synthase (296 aa).

This sequence belongs to the TrpC family.

It catalyses the reaction 1-(2-carboxyphenylamino)-1-deoxy-D-ribulose 5-phosphate + H(+) = (1S,2R)-1-C-(indol-3-yl)glycerol 3-phosphate + CO2 + H2O. It functions in the pathway amino-acid biosynthesis; L-tryptophan biosynthesis; L-tryptophan from chorismate: step 4/5. This is Indole-3-glycerol phosphate synthase from Microcystis aeruginosa (strain NIES-843 / IAM M-2473).